The following is a 335-amino-acid chain: Adenosine deaminase (335 aa).

Zn(2+) is bound by residues H12 and H14. The substrate site is built by H14 and D16. H197 lines the Zn(2+) pocket. The active-site Proton donor is E200. Position 278 (D278) interacts with Zn(2+).

Belongs to the metallo-dependent hydrolases superfamily. Adenosine and AMP deaminases family. Adenosine deaminase subfamily. Requires Zn(2+) as cofactor.

It catalyses the reaction adenosine + H2O + H(+) = inosine + NH4(+). The enzyme catalyses 2'-deoxyadenosine + H2O + H(+) = 2'-deoxyinosine + NH4(+). Catalyzes the hydrolytic deamination of adenosine and 2-deoxyadenosine. The polypeptide is Adenosine deaminase (Clostridium botulinum (strain Okra / Type B1)).